A 595-amino-acid polypeptide reads, in one-letter code: Glutamyl-tRNA(Gln) amidotransferase subunit B, mitochondrial (595 aa).

The N-terminal 114 residues, 1–114, are a transit peptide targeting the mitochondrion; that stretch reads MPRLWYSRYL…RAPTSTVAEP (114 aa). The interval 59–78 is disordered; that stretch reads KEEAKRSKSQSRNGRGKKQV.

Belongs to the GatB/GatE family. GatB subfamily. In terms of assembly, subunit of the heterotrimeric GatCAB amidotransferase (AdT) complex, composed of A, B and C subunits.

The protein localises to the mitochondrion. The catalysed reaction is L-glutamyl-tRNA(Gln) + L-glutamine + ATP + H2O = L-glutaminyl-tRNA(Gln) + L-glutamate + ADP + phosphate + H(+). In terms of biological role, allows the formation of correctly charged Gln-tRNA(Gln) through the transamidation of misacylated Glu-tRNA(Gln) in the mitochondria. The reaction takes place in the presence of glutamine and ATP through an activated gamma-phospho-Glu-tRNA(Gln). The chain is Glutamyl-tRNA(Gln) amidotransferase subunit B, mitochondrial from Talaromyces stipitatus (strain ATCC 10500 / CBS 375.48 / QM 6759 / NRRL 1006) (Penicillium stipitatum).